The chain runs to 156 residues: Endogenous retrovirus group K member 7 Pro protein (156 aa).

The region spanning 21-96 (FEGLVDTGAD…IPLNLWGRDL (76 aa)) is the Peptidase A2 domain. Residue D26 is part of the active site. The G-patch domain maps to 111-156 (YSPTSQKIMTKMGYIPGKGLGKNEDGIKVPVEAKINQEREGIGYPF).

The protein belongs to the peptidase A2 family. HERV class-II K(HML-2) subfamily. As to quaternary structure, active as a homodimer. In terms of processing, autoproteolytically processed at the N-terminus. Expected C-terminal autoprocessing not detected. The sequence shown is that of the processed Pro protein.

It catalyses the reaction Processing at the authentic HIV-1 PR recognition site and release of the mature p17 matrix and the p24 capsid protein, as a result of the cleavage of the -SQNY-|-PIVQ- cleavage site.. Functionally, retroviral proteases have roles in processing of the primary translation products and the maturation of the viral particle. Endogenous Pro proteins may have kept, lost or modified their original function during evolution. This endogenous protein has retained most of the characteristics of retroviral proteases. This Homo sapiens (Human) protein is Endogenous retrovirus group K member 7 Pro protein (ERVK-7).